The sequence spans 323 residues: Putative divalent cation/proton antiporter TMEM165 (323 aa).

Residues 1-33 form the signal peptide; it reads MAAAARGSGRAPTRRLLVLLLLQLLWAPAGVRA. Topologically, residues 34–89 are lumenal; the sequence is GPEEDLSHRNQEPPAPAQQLQPQPAAVQGLEPARAEKGLTPVAPVHTNKEDAAAQT. Basic and acidic residues predominate over residues 35-44; sequence PEEDLSHRNQ. The tract at residues 35 to 60 is disordered; it reads PEEDLSHRNQEPPAPAQQLQPQPAAV. The segment covering 50–59 has biased composition (low complexity); it reads AQQLQPQPAA. Residues 90 to 110 traverse the membrane as a helical segment; the sequence is NLGFIHAFVAAISVIIVSELG. The Cytoplasmic portion of the chain corresponds to 111-126; the sequence is DKTFFIAAIMAMRYNR. Residues 127-147 form a helical membrane-spanning segment; the sequence is LTVLAGAMLALALMTCLSVLF. Residues 148 to 151 lie on the Lumenal side of the membrane; that stretch reads GYAT. The helical transmembrane segment at 152–172 threads the bilayer; sequence TVIPRVYTYYVSTALFAIFGI. Topologically, residues 173-227 are cytoplasmic; sequence RMLREGLKMSPDEGQEELEEVQAELKKKDEEFQRTKLLNGPDVETGTSTAIPQKK. Residues 184-211 are a coiled coil; sequence DEGQEELEEVQAELKKKDEEFQRTKLLN. Residues 228 to 248 traverse the membrane as a helical segment; it reads WLHFISPIFVQALTLTFLAEW. Over 249-266 the chain is Lumenal; the sequence is GDRSQLTTIVLAAREDPY. The chain crosses the membrane as a helical span at residues 267–287; the sequence is GVAVGGTVGHCLCTGLAVIGG. Topologically, residues 288–298 are cytoplasmic; sequence RMIAQKISVRT. A helical transmembrane segment spans residues 299–319; that stretch reads VTIIGGIVFLAFAFSALFISP. Residues 320-323 lie on the Lumenal side of the membrane; sequence ESGF.

Belongs to the GDT1 family. In terms of tissue distribution, expressed in mammary epithelial cells (at protein level).

It localises to the golgi apparatus membrane. The catalysed reaction is Ca(2+)(in) + n H(+)(out) = Ca(2+)(out) + n H(+)(in). The enzyme catalyses Mn(2+)(in) + n H(+)(out) = Mn(2+)(out) + n H(+)(in). In terms of biological role, putative divalent cation:proton antiporter that exchanges calcium or manganese ions for protons across the Golgi membrane. Mediates the reversible transport of calcium or manganese to the Golgi lumen driven by the proton gradient and possibly the membrane potential generated by V-ATPase. Provides calcium or manganese cofactors to resident Golgi enzymes and contributes to the maintenance of an acidic luminal Golgi pH required for proper functioning of the secretory pathway. Promotes Ca(2+) storage within the Golgi lumen of the mammary epithelial cells to be then secreted into milk. The transport mechanism and stoichiometry remains to be elucidated. The protein is Putative divalent cation/proton antiporter TMEM165 of Mus musculus (Mouse).